The chain runs to 382 residues: Pyrimidine monooxygenase RutA (382 aa).

Residues 68-69 (IK), Asn134, Glu143, 159-160 (RY), and Ser209 each bind FMN.

The protein belongs to the NtaA/SnaA/DszA monooxygenase family. RutA subfamily.

The catalysed reaction is uracil + FMNH2 + NADH + O2 = (Z)-3-ureidoacrylate + FMN + NAD(+) + H2O + H(+). The enzyme catalyses thymine + FMNH2 + NADH + O2 = (Z)-2-methylureidoacrylate + FMN + NAD(+) + H2O + H(+). Catalyzes the pyrimidine ring opening between N-3 and C-4 by an unusual flavin hydroperoxide-catalyzed mechanism, adding oxygen atoms in the process to yield ureidoacrylate peracid, that immediately reacts with FMN forming ureidoacrylate and FMN-N(5)-oxide. The FMN-N(5)-oxide reacts spontaneously with NADH to produce FMN. Requires the flavin reductase RutF to regenerate FMN in vivo. The sequence is that of Pyrimidine monooxygenase RutA from Shigella flexneri serotype X (strain 2002017).